Here is a 269-residue protein sequence, read N- to C-terminus: Diaminopimelate epimerase (269 aa).

The substrate site is built by Asn-15, Gln-49, and Asn-66. Cys-75 acts as the Proton donor in catalysis. Substrate-binding positions include 76–77 (GN), Asn-155, Asn-187, and 204–205 (ER). The active-site Proton acceptor is the Cys-213. 214-215 (GS) provides a ligand contact to substrate.

This sequence belongs to the diaminopimelate epimerase family. Homodimer.

Its subcellular location is the cytoplasm. It catalyses the reaction (2S,6S)-2,6-diaminopimelate = meso-2,6-diaminopimelate. The protein operates within amino-acid biosynthesis; L-lysine biosynthesis via DAP pathway; DL-2,6-diaminopimelate from LL-2,6-diaminopimelate: step 1/1. Its function is as follows. Catalyzes the stereoinversion of LL-2,6-diaminopimelate (L,L-DAP) to meso-diaminopimelate (meso-DAP), a precursor of L-lysine and an essential component of the bacterial peptidoglycan. The sequence is that of Diaminopimelate epimerase from Rickettsia bellii (strain OSU 85-389).